The following is a 712-amino-acid chain: BTB/POZ domain-containing protein 18 (712 aa).

The BTB domain occupies 34–102 (CDVLLQAEGE…LYTSEMEVSQ (69 aa)). Disordered stretches follow at residues 157–176 (VTPSHHPHTPLPTNQTPCPL), 212–355 (RACP…EGQV), and 374–410 (ETPLKNTQDSPQIPDPGGDFQEPSGTQPFSSNEQEMS). A compositionally biased stretch (polar residues) spans 218-228 (QEKNSSPSSHS). Residues 229–238 (QEPRENKNDT) show a composition bias toward basic and acidic residues. Positions 277–288 (SKPSSILSGSSS) are enriched in low complexity. Residues 303 to 313 (VNKETPEDKPK) are compositionally biased toward basic and acidic residues. Polar residues predominate over residues 396 to 410 (PSGTQPFSSNEQEMS). 3 positions are modified to phosphoserine: Ser-420, Ser-671, and Ser-672. 2 disordered regions span residues 653–676 (KAGKEVSGHSELLGSLPASSEEEE) and 691–712 (TTVPSVWPDPSSESETEVDILT). Acidic residues predominate over residues 702–712 (SESETEVDILT).

The protein localises to the nucleus. Functionally, specifically required during spermatogenesis to promote expression of piRNA precursors. The piRNA metabolic process mediates the repression of transposable elements during meiosis by forming complexes composed of piRNAs and Piwi proteins and governs the methylation and subsequent repression of transposons, which is essential for the germline integrity. Acts by facilitating transcription elongation at piRNA loci during pachytene. In Homo sapiens (Human), this protein is BTB/POZ domain-containing protein 18.